Here is a 121-residue protein sequence, read N- to C-terminus: Basic phospholipase A2 BmjeTX-I (121 aa).

Disulfide bonds link cysteine 26–cysteine 114, cysteine 28–cysteine 45, cysteine 44–cysteine 95, cysteine 50–cysteine 121, cysteine 51–cysteine 88, cysteine 58–cysteine 82, and cysteine 76–cysteine 86. Positions 27, 29, and 31 each coordinate Ca(2+). Histidine 48 is a catalytic residue. Residue aspartate 49 participates in Ca(2+) binding. Residue aspartate 89 is part of the active site.

It depends on Ca(2+) as a cofactor. As to expression, expressed by the venom gland.

The protein localises to the secreted. The enzyme catalyses a 1,2-diacyl-sn-glycero-3-phosphocholine + H2O = a 1-acyl-sn-glycero-3-phosphocholine + a fatty acid + H(+). In terms of biological role, snake venom phospholipase A2 (PLA2) that induces a slight blockade of neuromuscular contraction in an indirectly stimulated chick biventer cervicis nerve-muscle preparation. Does not inhibit contraction of chick biventer cervicic nerve-muscle preparation in response to treatment with acetylcholine or KCl. The neuromuscular blockade is mediated by inhibitory action at the presynaptic motor nerve endings. Lyses skeletal myoblasts and myotubes in vitro, and intramuscular injection causes local muscle necrosis. Induces edema in the mouse foot pad. Induces a transient increase of IL-6 levels. PLA2 catalyzes the calcium-dependent hydrolysis of the 2-acyl groups in 3-sn-phosphoglycerides. This is Basic phospholipase A2 BmjeTX-I from Bothrops marajoensis (Marajo lancehead).